A 581-amino-acid chain; its full sequence is Pyridine nucleotide-disulfide oxidoreductase domain-containing protein 2 (581 aa).

Position 38–71 (valine 38–glycine 71) interacts with FAD.

This sequence belongs to the carotenoid/retinoid oxidoreductase family. Interacts with COX5B; this interaction may contribute to localize PYROXD2 to the inner face of the inner mitochondrial membrane.

It localises to the mitochondrion matrix. Functionally, probable oxidoreductase that may play a role as regulator of mitochondrial function. The polypeptide is Pyridine nucleotide-disulfide oxidoreductase domain-containing protein 2 (Pongo abelii (Sumatran orangutan)).